A 201-amino-acid chain; its full sequence is NADH-quinone oxidoreductase subunit C (201 aa).

It belongs to the complex I 30 kDa subunit family. NDH-1 is composed of 14 different subunits. Subunits NuoB, C, D, E, F, and G constitute the peripheral sector of the complex.

The protein resides in the cell inner membrane. The catalysed reaction is a quinone + NADH + 5 H(+)(in) = a quinol + NAD(+) + 4 H(+)(out). NDH-1 shuttles electrons from NADH, via FMN and iron-sulfur (Fe-S) centers, to quinones in the respiratory chain. The immediate electron acceptor for the enzyme in this species is believed to be ubiquinone. Couples the redox reaction to proton translocation (for every two electrons transferred, four hydrogen ions are translocated across the cytoplasmic membrane), and thus conserves the redox energy in a proton gradient. The polypeptide is NADH-quinone oxidoreductase subunit C (Aromatoleum aromaticum (strain DSM 19018 / LMG 30748 / EbN1) (Azoarcus sp. (strain EbN1))).